The sequence spans 542 residues: CTP synthase (542 aa).

The interval 1–265 (MARYVFITGG…DSEVLAAFGI (265 aa)) is amidoligase domain. S13 serves as a coordination point for CTP. UTP is bound at residue S13. Residues 14–19 (SLGKGI) and D71 contribute to the ATP site. Residues D71 and E139 each contribute to the Mg(2+) site. CTP contacts are provided by residues 146–148 (DIE), 186–191 (KTKPTQ), and K222. Residues 186–191 (KTKPTQ) and K222 contribute to the UTP site. One can recognise a Glutamine amidotransferase type-1 domain in the interval 291-541 (TIAIVGKYTG…VEAAVEQSRL (251 aa)). Residue G353 participates in L-glutamine binding. Catalysis depends on C380, which acts as the Nucleophile; for glutamine hydrolysis. L-glutamine contacts are provided by residues 381–384 (FGMQ), E404, and R469. Catalysis depends on residues H514 and E516.

Belongs to the CTP synthase family. In terms of assembly, homotetramer.

The catalysed reaction is UTP + L-glutamine + ATP + H2O = CTP + L-glutamate + ADP + phosphate + 2 H(+). It catalyses the reaction L-glutamine + H2O = L-glutamate + NH4(+). It carries out the reaction UTP + NH4(+) + ATP = CTP + ADP + phosphate + 2 H(+). It functions in the pathway pyrimidine metabolism; CTP biosynthesis via de novo pathway; CTP from UDP: step 2/2. Allosterically activated by GTP, when glutamine is the substrate; GTP has no effect on the reaction when ammonia is the substrate. The allosteric effector GTP functions by stabilizing the protein conformation that binds the tetrahedral intermediate(s) formed during glutamine hydrolysis. Inhibited by the product CTP, via allosteric rather than competitive inhibition. Its function is as follows. Catalyzes the ATP-dependent amination of UTP to CTP with either L-glutamine or ammonia as the source of nitrogen. Regulates intracellular CTP levels through interactions with the four ribonucleotide triphosphates. The polypeptide is CTP synthase (Agrobacterium fabrum (strain C58 / ATCC 33970) (Agrobacterium tumefaciens (strain C58))).